Consider the following 629-residue polypeptide: DNA mismatch repair protein MutL (629 aa).

The segment at 376 to 396 is disordered; the sequence is QYHEKPQQNQPHFSNTPVLPN. The span at 382 to 396 shows a compositional bias: polar residues; it reads QQNQPHFSNTPVLPN.

Belongs to the DNA mismatch repair MutL/HexB family.

Its function is as follows. This protein is involved in the repair of mismatches in DNA. It is required for dam-dependent methyl-directed DNA mismatch repair. May act as a 'molecular matchmaker', a protein that promotes the formation of a stable complex between two or more DNA-binding proteins in an ATP-dependent manner without itself being part of a final effector complex. This Haemophilus influenzae (strain PittEE) protein is DNA mismatch repair protein MutL.